The sequence spans 146 residues: Envelope protein OPG155 (146 aa).

Residues 1 to 21 (MNSLSIFFIVVATAAVCLLFI) form a helical; Signal-anchor for type III membrane protein membrane-spanning segment. Over 22-146 (QGYSIYENYG…AECQFLKSVL (125 aa)) the chain is Intravirion.

This sequence belongs to the orthopoxvirus OPG155 protein family. As to quaternary structure, part of a stable entry-fusion complex (EFC) which is at least composed of proteins OPG143, OPG147, OPG155, OPG086, OPG094, OPG107, OPG104, and OPG099. Formation of the viral membrane is necessary for the assembly of the complex. Interacts directly with protein OPG107. Post-translationally, contains two intramolecular disulfide bonds. They are created by the viral disulfide bond formation pathway, a poxvirus-specific pathway that operates on the cytoplasmic side of the MV membranes.

The protein localises to the virion membrane. Its function is as follows. Envelope protein required for virus entry into host cell and for cell-cell fusion (syncytium formation). The protein is Envelope protein OPG155 (OPG155) of Vaccinia virus (strain Ankara) (VACV).